The following is a 559-amino-acid chain: Pentatricopeptide repeat-containing protein At1g08610 (559 aa).

13 PPR repeats span residues 103-137, 138-172, 173-207, 208-242, 243-277, 278-312, 313-347, 348-382, 383-417, 418-452, 453-487, 488-522, and 523-557; these read DEETNNEILHNLCSNGKLTDACKLVEVMARHNQVP, HFPSCSNLVRGLARIDQLDKAMCILRVMVMSGGVP, DTITYNMIIGNLCKKGHIRTALVLLEDMSLSGSPP, DVITYNTVIRCMFDYGNAEQAIRFWKDQLQNGCPP, FMITYTVLVELVCRYCGSARAIEVLEDMAVEGCYP, DIVTYNSLVNYNCRRGNLEEVASVIQHILSHGLEL, NTVTYNTLLHSLCSHEYWDEVEEILNIMYQTSYCP, TVITYNILINGLCKARLLSRAIDFFYQMLEQKCLP, DIVTYNTVLGAMSKEGMVDDAIELLGLLKNTCCPP, GLITYNSVIDGLAKKGLMKKALELYHQMLDAGIFP, DDITRRSLIYGFCRANLVEEAGQVLKETSNRGNGI, RGSTYRLVIQGLCKKKEIEMAIEVVEIMLTGGCKP, and DETIYTAIVKGVEEMGMGSEAVQLQKKLKQWKLLK.

The protein belongs to the PPR family. P subfamily.

This Arabidopsis thaliana (Mouse-ear cress) protein is Pentatricopeptide repeat-containing protein At1g08610.